A 95-amino-acid polypeptide reads, in one-letter code: Large ribosomal subunit protein eL42 (95 aa).

4 residues coordinate Zn(2+): Cys11, Cys14, Cys71, and Cys74. The C4-type zinc-finger motif lies at 11-74; that stretch reads CPRCNTHTEH…QVLVITCTVC (64 aa).

The protein belongs to the eukaryotic ribosomal protein eL42 family. As to quaternary structure, part of the 50S ribosomal subunit. Requires Zn(2+) as cofactor.

In terms of biological role, binds to the 23S rRNA. The chain is Large ribosomal subunit protein eL42 from Aeropyrum pernix (strain ATCC 700893 / DSM 11879 / JCM 9820 / NBRC 100138 / K1).